A 466-amino-acid polypeptide reads, in one-letter code: Heat stress transcription factor A-5 (466 aa).

Residues 21–115 (PAPFLVKTYE…LLKNIHRRKP (95 aa)) mediate DNA binding. Residues 125-191 (SSTDQERAVL…KLLNFLETAI (67 aa)) are hydrophobic repeat HR-A/B. A Bipartite nuclear localization signal motif is present at residues 198-217 (KNFGKKVEQLDISAYNKKRR). Disordered regions lie at residues 215-248 (KRRLPEVEQSKPPSEDSHLDNSSGSSRRESGNIF), 272-300 (HSIQSSNEEGASPKGILSGGDPNTTLTKR), and 422-466 (TERP…QLTL). Basic and acidic residues predominate over residues 218 to 233 (LPEVEQSKPPSEDSHL). The AHA signature appears at 414 to 423 (DVFWEQFLTE). Polar residues-rich tracts occupy residues 425 to 438 (PGSSDNEEASSTYR) and 455 to 466 (LRNTKNIEQLTL). Positions 461–466 (IEQLTL) match the Nuclear export signal motif.

It belongs to the HSF family. Class A subfamily. As to quaternary structure, homotrimer. Post-translationally, exhibits temperature-dependent phosphorylation.

The protein resides in the cytoplasm. It localises to the nucleus. Transcriptional activator that specifically binds DNA sequence 5'-AGAAnnTTCT-3' known as heat shock promoter elements (HSE). This Arabidopsis thaliana (Mouse-ear cress) protein is Heat stress transcription factor A-5 (HSFA5).